Here is a 323-residue protein sequence, read N- to C-terminus: o-succinylbenzoate synthase (323 aa).

Lys134 serves as the catalytic Proton donor. Residues Asp162, Glu191, and Asp214 each contribute to the Mg(2+) site. Lys236 functions as the Proton acceptor in the catalytic mechanism.

Belongs to the mandelate racemase/muconate lactonizing enzyme family. MenC type 1 subfamily. Requires a divalent metal cation as cofactor.

It catalyses the reaction (1R,6R)-6-hydroxy-2-succinyl-cyclohexa-2,4-diene-1-carboxylate = 2-succinylbenzoate + H2O. The protein operates within quinol/quinone metabolism; 1,4-dihydroxy-2-naphthoate biosynthesis; 1,4-dihydroxy-2-naphthoate from chorismate: step 4/7. It participates in quinol/quinone metabolism; menaquinone biosynthesis. Functionally, converts 2-succinyl-6-hydroxy-2,4-cyclohexadiene-1-carboxylate (SHCHC) to 2-succinylbenzoate (OSB). The protein is o-succinylbenzoate synthase of Yersinia pseudotuberculosis serotype I (strain IP32953).